The chain runs to 545 residues: Chaperonin GroEL (545 aa).

ATP is bound by residues 29-32, lysine 50, 86-90, glycine 415, and aspartate 495; these read TLGP and DGTTT.

This sequence belongs to the chaperonin (HSP60) family. In terms of assembly, forms a cylinder of 14 subunits composed of two heptameric rings stacked back-to-back. Interacts with the co-chaperonin GroES.

It is found in the cytoplasm. It catalyses the reaction ATP + H2O + a folded polypeptide = ADP + phosphate + an unfolded polypeptide.. Functionally, together with its co-chaperonin GroES, plays an essential role in assisting protein folding. The GroEL-GroES system forms a nano-cage that allows encapsulation of the non-native substrate proteins and provides a physical environment optimized to promote and accelerate protein folding. This Bacteroides thetaiotaomicron (strain ATCC 29148 / DSM 2079 / JCM 5827 / CCUG 10774 / NCTC 10582 / VPI-5482 / E50) protein is Chaperonin GroEL.